A 467-amino-acid chain; its full sequence is Argininosuccinate lyase (467 aa).

The protein belongs to the lyase 1 family. Argininosuccinate lyase subfamily.

The protein localises to the cytoplasm. It catalyses the reaction 2-(N(omega)-L-arginino)succinate = fumarate + L-arginine. The protein operates within amino-acid biosynthesis; L-arginine biosynthesis; L-arginine from L-ornithine and carbamoyl phosphate: step 3/3. The sequence is that of Argininosuccinate lyase from Anaeromyxobacter sp. (strain K).